Reading from the N-terminus, the 122-residue chain is Flagellar protein FliT (122 aa).

The segment at 1–50 (MTSTVEFINRWQRIALLSQSLLELAQRGEWDLLLQQEVSYLQSIETVMEK) is required for homodimerization. The segment at 60 to 98 (IQDMVAGYIKQTLDNEQLLKGLLQQRLDELSSLIGQSTR) is fliD binding.

The protein belongs to the FliT family. Homodimer. Interacts with FliD and FlhC.

It is found in the cytoplasm. The protein localises to the cytosol. Functionally, dual-function protein that regulates the transcription of class 2 flagellar operons and that also acts as an export chaperone for the filament-capping protein FliD. As a transcriptional regulator, acts as an anti-FlhDC factor; it directly binds FlhC, thus inhibiting the binding of the FlhC/FlhD complex to class 2 promoters, resulting in decreased expression of class 2 flagellar operons. As a chaperone, effects FliD transition to the membrane by preventing its premature polymerization, and by directing it to the export apparatus. The sequence is that of Flagellar protein FliT from Salmonella schwarzengrund (strain CVM19633).